We begin with the raw amino-acid sequence, 224 residues long: Orotate phosphoribosyltransferase (224 aa).

Residues Lys26, 73-74, Arg100, Lys101, Lys104, His106, and 127-135 each bind 5-phospho-alpha-D-ribose 1-diphosphate; these read YK and EDVTTAGTS. 2 residues coordinate orotate: Thr131 and Arg160.

It belongs to the purine/pyrimidine phosphoribosyltransferase family. PyrE subfamily. In terms of assembly, homodimer. It depends on Mg(2+) as a cofactor.

It catalyses the reaction orotidine 5'-phosphate + diphosphate = orotate + 5-phospho-alpha-D-ribose 1-diphosphate. The protein operates within pyrimidine metabolism; UMP biosynthesis via de novo pathway; UMP from orotate: step 1/2. Catalyzes the transfer of a ribosyl phosphate group from 5-phosphoribose 1-diphosphate to orotate, leading to the formation of orotidine monophosphate (OMP). The protein is Orotate phosphoribosyltransferase of Clostridium beijerinckii (strain ATCC 51743 / NCIMB 8052) (Clostridium acetobutylicum).